Consider the following 87-residue polypeptide: Prohibitin 1 (87 aa).

A Phosphothreonine modification is found at T8. K62 is subject to N6-acetyllysine. A Phosphotyrosine modification is found at Y83.

It belongs to the prohibitin family. The mitochondrial prohibitin complex consists of two subunits (PHB1 and PHB2), assembled into a membrane-associated ring-shaped supercomplex of approximately 1 mDa. Interacts with STOML2. Interacts with MAP1LC3B (membrane-bound form LC3-II); the interaction requires PHB2 and takes place upon Parkin-mediated mitochondrial damage. Interacts with STAT3 (unphosphorylated or phosphorylated at 'Ser-727'). Interacts with CLPB. Interacts with CD86 (via cytoplasmic domain); the interactions increases after priming with CD40.

It is found in the mitochondrion inner membrane. It localises to the nucleus. The protein resides in the cytoplasm. Its subcellular location is the cell membrane. Its function is as follows. Protein with pleiotropic attributes mediated in a cell-compartment- and tissue-specific manner, which include the plasma membrane-associated cell signaling functions, mitochondrial chaperone, and transcriptional co-regulator of transcription factors in the nucleus. Plays a role in adipose tissue and glucose homeostasis in a sex-specific manner. Contributes to pulmonary vascular remodeling by accelerating proliferation of pulmonary arterial smooth muscle cells. Functionally, in the mitochondria, together with PHB2, forms large ring complexes (prohibitin complexes) in the inner mitochondrial membrane (IMM) and functions as a chaperone protein that stabilizes mitochondrial respiratory enzymes and maintains mitochondrial integrity in the IMM, which is required for mitochondrial morphogenesis, neuronal survival, and normal lifespan. The prohibitin complex, with DNAJC19, regulates cardiolipin remodeling and the protein turnover of OMA1 in a cardiolipin-binding manner. Regulates mitochondrial respiration activity playing a role in cellular aging. The prohibitin complex plays a role of mitophagy receptor involved in targeting mitochondria for autophagic degradation. Involved in mitochondrial-mediated antiviral innate immunity, activates RIG-I-mediated signal transduction and production of IFNB1 and proinflammatory cytokine IL6. In the nucleus, acts as a transcription coregulator, enhances promoter binding by TP53, a transcription factor it activates, but reduces the promoter binding by E2F1, a transcription factor it represses. Interacts with STAT3 to affect IL17 secretion in T-helper Th17 cells. In terms of biological role, in the plasma membrane, cooperates with CD86 to mediate CD86-signaling in B lymphocytes that regulates the level of IgG1 produced through the activation of distal signaling intermediates. Upon CD40 engagement, required to activate NF-kappa-B signaling pathway via phospholipase C and protein kinase C activation. The protein is Prohibitin 1 (PHB1) of Mesocricetus auratus (Golden hamster).